We begin with the raw amino-acid sequence, 242 residues long: Biosynthetic peptidoglycan transglycosylase (242 aa).

A helical transmembrane segment spans residues 19–39; it reads ILAALAVFWGGGIALFSVVPV.

The protein belongs to the glycosyltransferase 51 family.

It localises to the cell inner membrane. The enzyme catalyses [GlcNAc-(1-&gt;4)-Mur2Ac(oyl-L-Ala-gamma-D-Glu-L-Lys-D-Ala-D-Ala)](n)-di-trans,octa-cis-undecaprenyl diphosphate + beta-D-GlcNAc-(1-&gt;4)-Mur2Ac(oyl-L-Ala-gamma-D-Glu-L-Lys-D-Ala-D-Ala)-di-trans,octa-cis-undecaprenyl diphosphate = [GlcNAc-(1-&gt;4)-Mur2Ac(oyl-L-Ala-gamma-D-Glu-L-Lys-D-Ala-D-Ala)](n+1)-di-trans,octa-cis-undecaprenyl diphosphate + di-trans,octa-cis-undecaprenyl diphosphate + H(+). It participates in cell wall biogenesis; peptidoglycan biosynthesis. Functionally, peptidoglycan polymerase that catalyzes glycan chain elongation from lipid-linked precursors. The protein is Biosynthetic peptidoglycan transglycosylase of Salmonella agona (strain SL483).